Reading from the N-terminus, the 255-residue chain is 5'-nucleotidase SurE (255 aa).

4 residues coordinate a divalent metal cation: Asp-16, Asp-17, Ser-47, and Asn-100.

The protein belongs to the SurE nucleotidase family. A divalent metal cation serves as cofactor.

It localises to the cytoplasm. It carries out the reaction a ribonucleoside 5'-phosphate + H2O = a ribonucleoside + phosphate. Nucleotidase that shows phosphatase activity on nucleoside 5'-monophosphates. The sequence is that of 5'-nucleotidase SurE from Vibrio vulnificus (strain YJ016).